The sequence spans 526 residues: Peptide chain release factor 3 (526 aa).

The 267-residue stretch at 11-277 (SKRRTFAIIS…SLIKWAPSPL (267 aa)) folds into the tr-type G domain. GTP-binding positions include 20-27 (SHPDAGKT), 88-92 (DTPGH), and 142-145 (NKLD).

It belongs to the TRAFAC class translation factor GTPase superfamily. Classic translation factor GTPase family. PrfC subfamily.

The protein resides in the cytoplasm. Increases the formation of ribosomal termination complexes and stimulates activities of RF-1 and RF-2. It binds guanine nucleotides and has strong preference for UGA stop codons. It may interact directly with the ribosome. The stimulation of RF-1 and RF-2 is significantly reduced by GTP and GDP, but not by GMP. This Buchnera aphidicola subsp. Acyrthosiphon pisum (strain 5A) protein is Peptide chain release factor 3.